The primary structure comprises 389 residues: MSIKKDYDVIVVGAGSMGMAAGYYLSKQGVKTLLVDSFHPPHTNGSHHGDTRIIRHAYGEGREYVPFALRAQELWYELEKETHHKIFTKTGVLVFGPKGEAPFVAETMEAAKEHSLDVDLLEGSEINKRWPGVTVPENYNAIFEKNSGVLFSENCIRAYRELAEANGAKVLTYTPVEDFEIAEDFVKIQTAYGSFTASKLIVSMGAWNSKLLSKLNIEIPLQPYRQVVGFFECDEKKYSNTHGYPAFMVEVPTGIYYGFPSFGGCGLKIGYHTYGQKIDPDTINREFGIYPEDEGNIRKFLETYMPGATGELKSGDVCMYTKTPDEHFVIDLHPQFSNVAIAAGFSGHGFKFSSVVGETLSQLAVTGKTEHDISIFSINRPALKQKETI.

8–38 (DVIVVGAGSMGMAAGYYLSKQGVKTLLVDSF) contributes to the FAD binding site. The residue at position 318 (cysteine 318) is an S-8alpha-FAD cysteine.

The protein belongs to the MSOX/MTOX family. MSOX subfamily. As to quaternary structure, monomer. It depends on FAD as a cofactor.

Its subcellular location is the cytoplasm. It catalyses the reaction sarcosine + O2 + H2O = formaldehyde + glycine + H2O2. In terms of biological role, catalyzes the oxidative demethylation of sarcosine. The chain is Monomeric sarcosine oxidase (soxA) from Arthrobacter sp. (strain TE1826).